The primary structure comprises 503 residues: Aromatase (503 aa).

A run of 3 helical transmembrane segments spans residues 19–39 (EVAPVASIAILLLTGFLLLVW), 51–71 (GYFLGIGPLISHCRFLWMGIG), and 303–323 (MLIAAPDTMSVSVFFMLFLIA). Asp309 and Met374 together coordinate substrate. Position 437 (Cys437) interacts with heme.

This sequence belongs to the cytochrome P450 family. Requires heme as cofactor.

Its subcellular location is the endoplasmic reticulum membrane. It localises to the microsome membrane. The catalysed reaction is testosterone + 3 reduced [NADPH--hemoprotein reductase] + 3 O2 = 17beta-estradiol + formate + 3 oxidized [NADPH--hemoprotein reductase] + 4 H2O + 4 H(+). It catalyses the reaction androst-4-ene-3,17-dione + 3 reduced [NADPH--hemoprotein reductase] + 3 O2 = estrone + formate + 3 oxidized [NADPH--hemoprotein reductase] + 4 H2O + 4 H(+). The enzyme catalyses androst-4-ene-3,17-dione + reduced [NADPH--hemoprotein reductase] + O2 = 19-hydroxyandrost-4-ene-3,17-dione + oxidized [NADPH--hemoprotein reductase] + H2O + H(+). It carries out the reaction 19-hydroxyandrost-4-ene-3,17-dione + reduced [NADPH--hemoprotein reductase] + O2 = 19-oxo-androst-4-ene-3,17-dione + oxidized [NADPH--hemoprotein reductase] + 2 H2O + H(+). The catalysed reaction is 19-oxo-androst-4-ene-3,17-dione + reduced [NADPH--hemoprotein reductase] + O2 = estrone + formate + oxidized [NADPH--hemoprotein reductase] + H2O + 2 H(+). It catalyses the reaction estrone + reduced [NADPH--hemoprotein reductase] + O2 = 2-hydroxyestrone + oxidized [NADPH--hemoprotein reductase] + H2O + H(+). The enzyme catalyses 17beta-hydroxy-5alpha-androstan-3-one + reduced [NADPH--hemoprotein reductase] + O2 = 17beta,19-dihydroxy-3-oxo-5alpha-androstanone + oxidized [NADPH--hemoprotein reductase] + H2O + H(+). It carries out the reaction 17beta,19-dihydroxy-3-oxo-5alpha-androstanone + reduced [NADPH--hemoprotein reductase] + O2 = 17beta-hydroxy-3,19-dioxo-5alpha-androstanone + oxidized [NADPH--hemoprotein reductase] + 2 H2O + H(+). The catalysed reaction is 17beta-hydroxy-3,19-dioxo-5alpha-androstanone + reduced [NADPH--hemoprotein reductase] + O2 = 17beta-hydroxy-3-oxo-19-nor-5alpha-androst-1-ene + formate + oxidized [NADPH--hemoprotein reductase] + H2O + 2 H(+). It participates in steroid hormone biosynthesis. In terms of biological role, a cytochrome P450 monooxygenase that catalyzes the conversion of C19 androgens, androst-4-ene-3,17-dione (androstenedione) and testosterone to the C18 estrogens, estrone and estradiol, respectively. Catalyzes three successive oxidations of C19 androgens: two conventional oxidations at C19 yielding 19-hydroxy and 19-oxo/19-aldehyde derivatives, followed by a third oxidative aromatization step that involves C1-beta hydrogen abstraction combined with cleavage of the C10-C19 bond to yield a phenolic A ring and formic acid. Alternatively, the third oxidative reaction yields a 19-norsteroid and formic acid. Converts dihydrotestosterone to delta1,10-dehydro 19-nordihydrotestosterone and may play a role in homeostasis of this potent androgen. Also displays 2-hydroxylase activity toward estrone. Mechanistically, uses molecular oxygen inserting one oxygen atom into a substrate, and reducing the second into a water molecule, with two electrons provided by NADPH via cytochrome P450 reductase (CPR; NADPH-ferrihemoprotein reductase). The chain is Aromatase (CYP19A1) from Leucopleurus acutus (Atlantic white-sided dolphin).